The sequence spans 322 residues: Beta-ketoacyl-[acyl-carrier-protein] synthase III (322 aa).

Residues cysteine 113 and histidine 249 contribute to the active site. The ACP-binding stretch occupies residues 250-254; it reads QANVR. Asparagine 279 is an active-site residue.

Belongs to the thiolase-like superfamily. FabH family. In terms of assembly, homodimer.

Its subcellular location is the cytoplasm. It carries out the reaction malonyl-[ACP] + acetyl-CoA + H(+) = 3-oxobutanoyl-[ACP] + CO2 + CoA. Its pathway is lipid metabolism; fatty acid biosynthesis. Its function is as follows. Catalyzes the condensation reaction of fatty acid synthesis by the addition to an acyl acceptor of two carbons from malonyl-ACP. Catalyzes the first condensation reaction which initiates fatty acid synthesis and may therefore play a role in governing the total rate of fatty acid production. Possesses both acetoacetyl-ACP synthase and acetyl transacylase activities. Its substrate specificity determines the biosynthesis of branched-chain and/or straight-chain of fatty acids. The chain is Beta-ketoacyl-[acyl-carrier-protein] synthase III from Anaplasma marginale (strain St. Maries).